The sequence spans 114 residues: Ribonuclease U2 (114 aa).

Disulfide bonds link C1–C54, C9–C113, and C55–C96. Ca(2+) is bound by residues D29, V30, A31, N32, D37, and Y39. Y39–E49 provides a ligand contact to substrate. Residue H41 is part of the active site. E62 serves as the catalytic Proton acceptor. R85 lines the substrate pocket. H101 acts as the Proton donor in catalysis. Residue D108–F110 coordinates substrate.

It belongs to the ribonuclease U2 family.

It catalyses the reaction [RNA] containing adenosine + H2O = an [RNA fragment]-3'-adenosine-3'-phosphate + a 5'-hydroxy-ribonucleotide-3'-[RNA fragment].. It carries out the reaction [RNA] containing guanosine + H2O = an [RNA fragment]-3'-guanosine-3'-phosphate + a 5'-hydroxy-ribonucleotide-3'-[RNA fragment].. The protein is Ribonuclease U2 (RNU2) of Ustilago sphaerogena (Smut fungus).